A 210-amino-acid chain; its full sequence is Orotate phosphoribosyltransferase (210 aa).

5-phospho-alpha-D-ribose 1-diphosphate is bound by residues Arg96, Lys100, His102, and 122–130 (EDLISTGGS). Ser126 is an orotate binding site.

The protein belongs to the purine/pyrimidine phosphoribosyltransferase family. PyrE subfamily. In terms of assembly, homodimer. The cofactor is Mg(2+).

The enzyme catalyses orotidine 5'-phosphate + diphosphate = orotate + 5-phospho-alpha-D-ribose 1-diphosphate. The protein operates within pyrimidine metabolism; UMP biosynthesis via de novo pathway; UMP from orotate: step 1/2. Functionally, catalyzes the transfer of a ribosyl phosphate group from 5-phosphoribose 1-diphosphate to orotate, leading to the formation of orotidine monophosphate (OMP). In Streptococcus pneumoniae (strain ATCC BAA-255 / R6), this protein is Orotate phosphoribosyltransferase.